A 426-amino-acid polypeptide reads, in one-letter code: Putative F-box/LRR-repeat protein At4g15060 (426 aa).

The region spanning 25 to 71 (MDKISRLPDDLLVKVLLFLPTKIAVSTSILSKRWEFLWMWLPKLEYH) is the F-box domain. LRR repeat units lie at residues 50–75 (STSI…NTNY), 80–106 (EQRL…RLKF), 160–187 (ILKL…LLKR), 188–213 (VTYK…VVER), 221–259 (TLSI…KLTD), 265–290 (ETEL…HIDS), 311–337 (CVKV…KLCP), 338–363 (CDSN…EIKL), and 373–399 (DPAC…TWTW).

The polypeptide is Putative F-box/LRR-repeat protein At4g15060 (Arabidopsis thaliana (Mouse-ear cress)).